The chain runs to 360 residues: Phospho-N-acetylmuramoyl-pentapeptide-transferase (360 aa).

Over 1-25 (MLVWLAEHLVKYYSGFNVFSYLTFR) the chain is Periplasmic. The chain crosses the membrane as a helical span at residues 26-46 (AIVSLLTALFISLWMGPRMIA). The Cytoplasmic portion of the chain corresponds to 47–71 (HLQKLSFGQVVRNDGPESHFSKRGT). The chain crosses the membrane as a helical span at residues 72 to 92 (PTMGGIMILTAIVISVLLWAY). Position 93 (Pro-93) is a topological domain, periplasmic. A helical transmembrane segment spans residues 94–114 (SNPYVWCVLVVLVGYGIIGFV). Residues 115–131 (DDYRKVVRKDTKGLIAR) are Cytoplasmic-facing. Residues 132–152 (WKYFWMSVIALGVAFALYLAG) traverse the membrane as a helical segment. Residues 153-167 (KDTPATQLVVPFFKD) are Periplasmic-facing. A helical transmembrane segment spans residues 168-188 (VMPQLGLFYILLAYFVIVGTG). Residues 189–198 (NAVNLTDGLD) are Cytoplasmic-facing. The helical transmembrane segment at 199 to 219 (GLAIMPTVFVAGGFALVAWAT) threads the bilayer. Over 220–235 (GNMNFASYLHIPYLRH) the chain is Periplasmic. The helical transmembrane segment at 236 to 256 (AGELVIVCTAIVGAGLGFLWF) threads the bilayer. At 257–262 (NTYPAQ) the chain is on the cytoplasmic side. A helical transmembrane segment spans residues 263 to 283 (VFMGDVGSLALGGALGIIAVL). At 284–287 (LRQE) the chain is on the periplasmic side. The helical transmembrane segment at 288-308 (FLLVIMGGVFVVETLSVILQV) threads the bilayer. At 309–337 (GSFKLRGQRIFRMAPIHHHYELKGWPEPR) the chain is on the cytoplasmic side. Residues 338-358 (VIVRFWIISLMLVLIGLATLK) form a helical membrane-spanning segment. The Periplasmic portion of the chain corresponds to 359–360 (VR).

The protein belongs to the glycosyltransferase 4 family. MraY subfamily. The cofactor is Mg(2+).

Its subcellular location is the cell inner membrane. The catalysed reaction is UDP-N-acetyl-alpha-D-muramoyl-L-alanyl-gamma-D-glutamyl-meso-2,6-diaminopimeloyl-D-alanyl-D-alanine + di-trans,octa-cis-undecaprenyl phosphate = di-trans,octa-cis-undecaprenyl diphospho-N-acetyl-alpha-D-muramoyl-L-alanyl-D-glutamyl-meso-2,6-diaminopimeloyl-D-alanyl-D-alanine + UMP. It participates in cell wall biogenesis; peptidoglycan biosynthesis. In terms of biological role, catalyzes the initial step of the lipid cycle reactions in the biosynthesis of the cell wall peptidoglycan: transfers peptidoglycan precursor phospho-MurNAc-pentapeptide from UDP-MurNAc-pentapeptide onto the lipid carrier undecaprenyl phosphate, yielding undecaprenyl-pyrophosphoryl-MurNAc-pentapeptide, known as lipid I. The chain is Phospho-N-acetylmuramoyl-pentapeptide-transferase from Escherichia coli O7:K1 (strain IAI39 / ExPEC).